The primary structure comprises 705 residues: Ion-translocating oxidoreductase complex subunit C (705 aa).

4Fe-4S ferredoxin-type domains follow at residues 368–397 (MGETPEEQGCIRCSACADACPADLLPQQLY) and 407–435 (KATAHNIADCIECGACAWVCPSSIPLVQY). [4Fe-4S] cluster-binding residues include Cys-377, Cys-380, Cys-383, Cys-387, Cys-416, Cys-419, Cys-422, and Cys-426. The segment at 536–684 (RARQAENIPA…EPVDPRKAAV (149 aa)) is disordered.

The protein belongs to the 4Fe4S bacterial-type ferredoxin family. RnfC subfamily. The complex is composed of six subunits: RnfA, RnfB, RnfC, RnfD, RnfE and RnfG. It depends on [4Fe-4S] cluster as a cofactor.

The protein localises to the cell inner membrane. Its function is as follows. Part of a membrane-bound complex that couples electron transfer with translocation of ions across the membrane. This is Ion-translocating oxidoreductase complex subunit C from Citrobacter koseri (strain ATCC BAA-895 / CDC 4225-83 / SGSC4696).